The following is a 202-amino-acid chain: Nucleoside triphosphate pyrophosphatase (202 aa).

D79 serves as the catalytic Proton acceptor.

Belongs to the Maf family. A divalent metal cation serves as cofactor.

The protein localises to the cytoplasm. The enzyme catalyses a ribonucleoside 5'-triphosphate + H2O = a ribonucleoside 5'-phosphate + diphosphate + H(+). It catalyses the reaction a 2'-deoxyribonucleoside 5'-triphosphate + H2O = a 2'-deoxyribonucleoside 5'-phosphate + diphosphate + H(+). Its function is as follows. Nucleoside triphosphate pyrophosphatase. May have a dual role in cell division arrest and in preventing the incorporation of modified nucleotides into cellular nucleic acids. The polypeptide is Nucleoside triphosphate pyrophosphatase (Bradyrhizobium diazoefficiens (strain JCM 10833 / BCRC 13528 / IAM 13628 / NBRC 14792 / USDA 110)).